Reading from the N-terminus, the 478-residue chain is MSTNGDNHQVKDSLEQLRCHFTWELFIEDDEMPDLENRVLDQIEFLDTKYNVGIHNLLAYVKHLKGQNEEALKSLKEAEDLMQKEHANQASVRSLVTWSNFAWVYYHMGRLAEAQAYLDKVENICKKPSNPFRYRMECPEIDCEEGWALLKCGGKNYERAKACFEKALEGDHENPEFSTGYAISAYRLDGFKLATKGYRQFSLLPLRQAVSLNPDNGYLKVLLALKLQDNGQEAEGEKYLEEALANMSSQTYVFRYAAKFYRRKGSVDKALELLKKALQETPTSVLLHHQIGLCYKAQMIQIKEATKGQPRGQNREKIDKMIRLAIFHFESAVENKPTFEVAHLDLARMYIEAGNHRKAEETFQKLLCMKPVVEETMQDIHLQYARFQEFQKKSEINAIIHYLKAIKIEQTSFIRDKSINSLKKLVLKKLQRNALDLESLSLLGFVYKLKGNMNEALEYYERALRLAADFENSVRQGP.

TPR repeat units lie at residues 52-85 (VGIH…MQKE), 95-128 (LVTW…CKKP), 139-174 (PEID…DHEN), 183-216 (ISAY…NPDN), 218-249 (YLKV…NMSS), and 251-284 (TYVF…TPTS). Trp-147 contacts mRNA. Gly-190 is a binding site for RNA. Residues Lys-259, His-289, Gln-290, and Lys-336 each contribute to the RNA site. TPR repeat units follow at residues 305–339 (ATKG…KPTF), 340–373 (EVAH…KPVV), 378–412 (QDIH…EQTS), and 437–470 (LESL…AADF).

Belongs to the IFIT family. In terms of assembly, component of an interferon-dependent multiprotein complex, at least composed of IFIT1, IFIT2 and IFIT3. Interacts (via TPR repeats 1-4) with RPL15. Interacts with STING1/MITA; could disrupt STING1 interaction with MAVS or TBK1, acting as a negative-feedback regulator of virus-triggered signaling. Interacts with EIF3E; this could be an alternative way to inhibit translation. Post-translationally, phosphorylated. In terms of processing, ISGylated.

It is found in the cytoplasm. Functionally, plays a key role in the innate immune response as part of an interferon-dependent multiprotein complex, recognizing and sequestering viral RNAs that lack host-specific 2'-O-methylation at their 5' cap. By distinguishing these RNAs from host mRNAs, inhibits their translation by competing with the translation initiation factor eIF4E. Could also prevent viral replication through its interaction with DNA replication origin-binding protein E1 of several viruses. Causes the translocation of E1 from the nucleus to the cytoplasm and can also inhibit its helicase activity in vitro. This Macaca fascicularis (Crab-eating macaque) protein is Antiviral innate immune response effector IFIT1.